Reading from the N-terminus, the 180-residue chain is SAGA-associated factor 11 homolog (180 aa).

The SGF11-type zinc finger occupies 98 to 119; sequence CSCPNCNRIVAASRFAPHLEKC. The tract at residues 138–180 is disordered; it reads RDGGNYFGADEDDEDDADWSGEKRKKKIAPVRTNGSKKNGKTS. The span at 146 to 156 shows a compositional bias: acidic residues; the sequence is ADEDDEDDADW.

The protein belongs to the SGF11 family. As to quaternary structure, component of some SAGA transcription coactivator-HAT complexes. Within the SAGA complex, participates in a subcomplex of SAGA called the DUB module (deubiquitination module).

Its subcellular location is the nucleus. Component of the transcription regulatory histone acetylation (HAT) complex SAGA, a multiprotein complex that activates transcription by remodeling chromatin and mediating histone acetylation and deubiquitination. Within the SAGA complex, participates in a subcomplex that specifically deubiquitinates histone H2B. The SAGA complex is recruited to specific gene promoters by activators, where it is required for transcription. The polypeptide is SAGA-associated factor 11 homolog (Aedes aegypti (Yellowfever mosquito)).